We begin with the raw amino-acid sequence, 65 residues long: ATP synthase F(0) complex subunit 8 (65 aa).

The helical transmembrane segment at 8-24 threads the bilayer; it reads TWLTTILSMFLALFIIF. At lysine 53 the chain carries N6-acetyllysine; alternate. Position 53 is an N6-succinyllysine; alternate (lysine 53). The residue at position 56 (lysine 56) is an N6-acetyllysine.

The protein belongs to the ATPase protein 8 family. Component of the ATP synthase complex composed at least of ATP5F1A/subunit alpha, ATP5F1B/subunit beta, ATP5MC1/subunit c (homooctomer), MT-ATP6/subunit a, MT-ATP8/subunit 8, ATP5ME/subunit e, ATP5MF/subunit f, ATP5MG/subunit g, ATP5MK/subunit k, ATP5MJ/subunit j, ATP5F1C/subunit gamma, ATP5F1D/subunit delta, ATP5F1E/subunit epsilon, ATP5PF/subunit F6, ATP5PB/subunit b, ATP5PD/subunit d, ATP5PO/subunit OSCP. ATP synthase complex consists of a soluble F(1) head domain (subunits alpha(3) and beta(3)) - the catalytic core - and a membrane F(0) domain - the membrane proton channel (subunits c, a, 8, e, f, g, k and j). These two domains are linked by a central stalk (subunits gamma, delta, and epsilon) rotating inside the F1 region and a stationary peripheral stalk (subunits F6, b, d, and OSCP). Interacts with PRICKLE3.

Its subcellular location is the mitochondrion membrane. Its function is as follows. Subunit 8, of the mitochondrial membrane ATP synthase complex (F(1)F(0) ATP synthase or Complex V) that produces ATP from ADP in the presence of a proton gradient across the membrane which is generated by electron transport complexes of the respiratory chain. ATP synthase complex consist of a soluble F(1) head domain - the catalytic core - and a membrane F(1) domain - the membrane proton channel. These two domains are linked by a central stalk rotating inside the F(1) region and a stationary peripheral stalk. During catalysis, ATP synthesis in the catalytic domain of F(1) is coupled via a rotary mechanism of the central stalk subunits to proton translocation. In vivo, can only synthesize ATP although its ATP hydrolase activity can be activated artificially in vitro. Part of the complex F(0) domain. The chain is ATP synthase F(0) complex subunit 8 from Capra ibex ibex (Alpine ibex).